A 425-amino-acid polypeptide reads, in one-letter code: Dihydroorotase (425 aa).

The Zn(2+) site is built by histidine 61 and histidine 63. Substrate contacts are provided by residues 63–65 and asparagine 95; that span reads HLR. Zn(2+)-binding residues include aspartate 153, histidine 180, and histidine 233. Asparagine 279 contributes to the substrate binding site. A Zn(2+)-binding site is contributed by aspartate 306. The active site involves aspartate 306. Histidine 310 is a substrate binding site.

This sequence belongs to the metallo-dependent hydrolases superfamily. DHOase family. Class I DHOase subfamily. Zn(2+) is required as a cofactor.

It catalyses the reaction (S)-dihydroorotate + H2O = N-carbamoyl-L-aspartate + H(+). It functions in the pathway pyrimidine metabolism; UMP biosynthesis via de novo pathway; (S)-dihydroorotate from bicarbonate: step 3/3. Catalyzes the reversible cyclization of carbamoyl aspartate to dihydroorotate. This Trichlorobacter lovleyi (strain ATCC BAA-1151 / DSM 17278 / SZ) (Geobacter lovleyi) protein is Dihydroorotase.